The chain runs to 115 residues: Ribonuclease P protein component (115 aa).

It belongs to the RnpA family. As to quaternary structure, consists of a catalytic RNA component (M1 or rnpB) and a protein subunit.

It carries out the reaction Endonucleolytic cleavage of RNA, removing 5'-extranucleotides from tRNA precursor.. Functionally, RNaseP catalyzes the removal of the 5'-leader sequence from pre-tRNA to produce the mature 5'-terminus. It can also cleave other RNA substrates such as 4.5S RNA. The protein component plays an auxiliary but essential role in vivo by binding to the 5'-leader sequence and broadening the substrate specificity of the ribozyme. In Buchnera aphidicola subsp. Acyrthosiphon pisum (strain APS) (Acyrthosiphon pisum symbiotic bacterium), this protein is Ribonuclease P protein component.